The primary structure comprises 318 residues: D-alanine--D-alanine ligase (318 aa).

One can recognise an ATP-grasp domain in the interval 117–315 (KQVWLSLGLS…FETLVWRVLE (199 aa)). 146–201 (ARQIGLPIIVKPANEGSSVGVSRVFDQAQLEEAVTLAARYDGALLMEQLIEGDELT) serves as a coordination point for ATP. Mg(2+) contacts are provided by D268, E282, and N284.

This sequence belongs to the D-alanine--D-alanine ligase family. It depends on Mg(2+) as a cofactor. The cofactor is Mn(2+).

The protein resides in the cytoplasm. The enzyme catalyses 2 D-alanine + ATP = D-alanyl-D-alanine + ADP + phosphate + H(+). The protein operates within cell wall biogenesis; peptidoglycan biosynthesis. Functionally, cell wall formation. This chain is D-alanine--D-alanine ligase, found in Xanthomonas axonopodis pv. citri (strain 306).